Reading from the N-terminus, the 293-residue chain is uncharacterized protein (293 aa).

It belongs to the TolB family.

This is an uncharacterized protein from Agrobacterium fabrum (strain C58 / ATCC 33970) (Agrobacterium tumefaciens (strain C58)).